Consider the following 537-residue polypeptide: Chaperonin GroEL (537 aa).

ATP-binding positions include 29–32 (TLGP), 86–90 (DGTTT), G413, 477–479 (NAA), and D493.

Belongs to the chaperonin (HSP60) family. Forms a cylinder of 14 subunits composed of two heptameric rings stacked back-to-back. Interacts with the co-chaperonin GroES.

It is found in the cytoplasm. It carries out the reaction ATP + H2O + a folded polypeptide = ADP + phosphate + an unfolded polypeptide.. In terms of biological role, together with its co-chaperonin GroES, plays an essential role in assisting protein folding. The GroEL-GroES system forms a nano-cage that allows encapsulation of the non-native substrate proteins and provides a physical environment optimized to promote and accelerate protein folding. The sequence is that of Chaperonin GroEL from Parascardovia denticolens (Bifidobacterium denticolens).